The primary structure comprises 198 residues: Superoxide dismutase [Fe] (198 aa).

Fe cation contacts are provided by H27, H74, D157, and H161.

It belongs to the iron/manganese superoxide dismutase family. In terms of assembly, homodimer. Requires Fe cation as cofactor.

It catalyses the reaction 2 superoxide + 2 H(+) = H2O2 + O2. Destroys superoxide anion radicals which are normally produced within the cells and which are toxic to biological systems. The sequence is that of Superoxide dismutase [Fe] (sodB) from Pseudomonas putida (strain ATCC 47054 / DSM 6125 / CFBP 8728 / NCIMB 11950 / KT2440).